We begin with the raw amino-acid sequence, 319 residues long: Forkhead box protein E3 (319 aa).

A disordered region spans residues 1-69 (MAGRSDMDPP…GRRRRRPLQR (69 aa)). Residues 44-53 (AAAGRGEAAP) show a composition bias toward low complexity. Positions 71–165 (KPPYSYIALI…DNGSFLRRRK (95 aa)) form a DNA-binding region, fork-head.

It localises to the nucleus. In terms of biological role, transcription factor that controls lens epithelial cell growth through regulation of proliferation, apoptosis and cell cycle. During lens development, controls the ratio of the lens fiber cells to the cells of the anterior lens epithelium by regulating the rate of proliferation and differentiation. Controls lens vesicle closure and subsequent separation of the lens vesicle from ectoderm. Controls the expression of DNAJB1 in a pathway that is crucial for the development of the anterior segment of the eye. The chain is Forkhead box protein E3 (FOXE3) from Homo sapiens (Human).